The primary structure comprises 24 residues: DCCGVKLEMCHPCLCDNSCKNYGK.

Disulfide bonds link C2/C10, C3/C15, and C13/C19. K24 carries the post-translational modification Lysine amide.

It belongs to the conotoxin A superfamily. In terms of tissue distribution, expressed by the venom duct.

It localises to the secreted. Functionally, probable neurotoxin with ion channel inhibitor activity. In vivo, elicits dose-dependently excitatory activity upon injection into fish. Its action is slowly reversible. The sequence is that of Conotoxin PIVE from Conus purpurascens (Purple cone).